A 579-amino-acid chain; its full sequence is Glypican-2 (579 aa).

The first 23 residues, 1 to 23 (MSALRPLLLLLLPLCPGPGPGPG), serve as a signal peptide directing secretion. Residues Ser-55, Ser-92, and Ser-155 are each glycosylated (O-linked (Xyl...) (heparan sulfate) serine). Disordered regions lie at residues 444 to 468 (GGSPAEQVNNPELKVDASGPDVPTR) and 485 to 555 (ALGH…RSGG). 2 O-linked (Xyl...) (heparan sulfate) serine glycosylation sites follow: Ser-500 and Ser-502. The span at 520-529 (PARPPRPPYP) shows a compositional bias: pro residues. Gly-554 carries the GPI-anchor amidated glycine lipid modification. Positions 555 to 579 (GASIGFHTQTILILSLSALALLGPR) are cleaved as a propeptide — removed in mature form.

This sequence belongs to the glypican family. In terms of assembly, interacts (via heparan sulfate) with PTN; this interaction promotes neurite outgrowth through binding of PTN with chondroitin sulfate of proteoglycans, thereby releasing PTPRS of chondroitin sulfate proteoglycans (CSPGs) and leading to binding with heparan sulfate of GPC2. Interacts (heparan sulfate chain) with MDK; this interaction is inhibited by heparin followed by chondroitin sulfate E; this interaction induces GPC2 clustering through heparan sulfate chain; this interaction induces neuronal cell adhesion and neurite outgrowth.

It localises to the cell membrane. It is found in the secreted. Its subcellular location is the extracellular space. Its function is as follows. Cell surface proteoglycan that bears heparan sulfate. May fulfill a function related to the motile behaviors of developing neurons. The sequence is that of Glypican-2 (GPC2) from Homo sapiens (Human).